A 381-amino-acid polypeptide reads, in one-letter code: Cytochrome b (381 aa).

The next 4 membrane-spanning stretches (helical) occupy residues 34–54 (FGSL…FLAM), 78–99 (WLIR…YLHI), 114–134 (WNIG…GYVL), and 179–199 (FFAF…IHLL). The heme b site is built by histidine 84 and histidine 98. Positions 183 and 197 each coordinate heme b. Histidine 202 contacts a ubiquinone. A run of 4 helical transmembrane segments spans residues 227 to 247 (YKDL…ALFM), 289 to 309 (LGGV…PLLH), 321 to 341 (LTQI…WIGG), and 348 to 368 (FITV…IIMP).

It belongs to the cytochrome b family. The cytochrome bc1 complex contains 3 respiratory subunits (MT-CYB, CYC1 and UQCRFS1), 2 core proteins (UQCRC1 and UQCRC2) and probably 6 low-molecular weight proteins. It depends on heme b as a cofactor.

The protein localises to the mitochondrion inner membrane. Functionally, component of the ubiquinol-cytochrome c reductase complex (complex III or cytochrome b-c1 complex) that is part of the mitochondrial respiratory chain. The b-c1 complex mediates electron transfer from ubiquinol to cytochrome c. Contributes to the generation of a proton gradient across the mitochondrial membrane that is then used for ATP synthesis. This Sphyrna tiburo vespertina (Pacific bonnethead shark) protein is Cytochrome b (mt-cyb).